Consider the following 533-residue polypeptide: Drimenyl diphosphate synthase (533 aa).

Residues Arg-132, Lys-133, Gln-163, and Trp-165 each contribute to the (2E,6E)-farnesyl diphosphate site. Glu-169 provides a ligand contact to Mg(2+). PFTB repeat units follow at residues 274 to 316 (VTPM…RRAA), 324 to 366 (VAEA…AHDP), 372 to 415 (VDEA…AAHG), 425 to 466 (AERA…ARGP), and 474 to 517 (LDRA…FVLL). Asp-303 serves as the catalytic Proton donor. Position 501 (Arg-501) interacts with (2E,6E)-farnesyl diphosphate.

The protein belongs to the terpene cyclase/mutase family. Mg(2+) serves as cofactor. Requires Ni(2+) as cofactor. Co(2+) is required as a cofactor.

It catalyses the reaction (2E,6E)-farnesyl diphosphate = (5S,9S,10S)-drim-7-en-11-yl diphosphate. Catalyzes the cyclization of farnesyl diphosphate (FPP) to drimenyl diphosphate. Cannot use geranylgeranyl diphosphate (GGPP) as substrate. The polypeptide is Drimenyl diphosphate synthase (Streptomyces showdoensis).